The sequence spans 568 residues: Sulfite reductase [NADPH] hemoprotein beta-component (568 aa).

Cys-425, Cys-431, Cys-470, and Cys-474 together coordinate [4Fe-4S] cluster. Residue Cys-474 participates in siroheme binding.

This sequence belongs to the nitrite and sulfite reductase 4Fe-4S domain family. As to quaternary structure, alpha(8)-beta(8). The alpha component is a flavoprotein, the beta component is a hemoprotein. Siroheme serves as cofactor. Requires [4Fe-4S] cluster as cofactor.

The enzyme catalyses hydrogen sulfide + 3 NADP(+) + 3 H2O = sulfite + 3 NADPH + 4 H(+). It functions in the pathway sulfur metabolism; hydrogen sulfide biosynthesis; hydrogen sulfide from sulfite (NADPH route): step 1/1. Its function is as follows. Component of the sulfite reductase complex that catalyzes the 6-electron reduction of sulfite to sulfide. This is one of several activities required for the biosynthesis of L-cysteine from sulfate. The chain is Sulfite reductase [NADPH] hemoprotein beta-component from Xanthomonas campestris pv. campestris (strain B100).